An 83-amino-acid chain; its full sequence is Exodeoxyribonuclease 7 small subunit (83 aa).

It belongs to the XseB family. In terms of assembly, heterooligomer composed of large and small subunits.

It is found in the cytoplasm. The enzyme catalyses Exonucleolytic cleavage in either 5'- to 3'- or 3'- to 5'-direction to yield nucleoside 5'-phosphates.. In terms of biological role, bidirectionally degrades single-stranded DNA into large acid-insoluble oligonucleotides, which are then degraded further into small acid-soluble oligonucleotides. In Rhizobium leguminosarum bv. trifolii (strain WSM2304), this protein is Exodeoxyribonuclease 7 small subunit.